The primary structure comprises 554 residues: Hydroxylamine reductase (554 aa).

Residues C3, C6, C18, and C25 each contribute to the [2Fe-2S] cluster site. Residues H252, E276, C320, C408, C436, C461, E495, and K497 each contribute to the hybrid [4Fe-2O-2S] cluster site. At C408 the chain carries Cysteine persulfide.

It belongs to the HCP family. The cofactor is [2Fe-2S] cluster. It depends on hybrid [4Fe-2O-2S] cluster as a cofactor.

It is found in the cytoplasm. The enzyme catalyses A + NH4(+) + H2O = hydroxylamine + AH2 + H(+). Functionally, catalyzes the reduction of hydroxylamine to form NH(3) and H(2)O. The protein is Hydroxylamine reductase of Shewanella sp. (strain MR-4).